We begin with the raw amino-acid sequence, 464 residues long: ERO1-like protein alpha (464 aa).

A signal peptide spans 1–23 (MGRGWGLLVGLLGVVWLLRSGQG). Disulfide bonds link Cys35–Cys48, Cys37–Cys46, Cys85–Cys387, Cys94–Cys99, Cys94–Cys130, Cys99–Cys104, Cys207–Cys237, and Cys390–Cys393. 3 positions are modified to phosphoserine: Ser106, Ser142, and Ser144. 3 residues coordinate FAD: Arg186, Thr188, and Trp199. FAD-binding residues include Ser248 and His251. Asn276 is a glycosylation site (N-linked (GlcNAc...) asparagine). The FAD site is built by Arg283 and Arg296. An N-linked (GlcNAc...) asparagine glycan is attached at Asn380.

The protein belongs to the EROs family. As to quaternary structure, predominantly monomer. May function both as a monomer and a homodimer. Interacts with PDILT. Interacts with ERP44; the interaction results in retention of ERO1A in the endoplasmic reticulum. FAD is required as a cofactor. N-glycosylated. Post-translationally, the Cys-94/Cys-99 and Cys-390/Cys-393 disulfide bonds constitute the redox-active center. The Cys-94/Cys-99 disulfide bond may accept electron from P4HB and funnel them to the active site disulfide Cys-390/Cys-393. The regulatory Cys-99/Cys-104 disulfide bond stabilizes the other regulatory bond Cys-94/Cys-130. In terms of processing, phosphorylated on Ser-144 by FAM20C in the Golgi which increases its enzymatic activity. Phosphorylation is induced by lactation. It is also induced by hypoxia and reductive stress.

The protein localises to the endoplasmic reticulum membrane. It is found in the golgi apparatus lumen. Its subcellular location is the secreted. The protein resides in the cell projection. It localises to the dendrite. With respect to regulation, enzyme activity is tightly regulated to prevent the accumulation of reactive oxygen species in the endoplasmic reticulum. Reversibly down-regulated by the formation of disulfide bonds between the active site Cys-94 and Cys-130, and between Cys-99 and Cys-104. Glutathione may be required to regulate its activity in the endoplasmic reticulum. Functionally, oxidoreductase involved in disulfide bond formation in the endoplasmic reticulum. Efficiently reoxidizes P4HB/PDI, the enzyme catalyzing protein disulfide formation, in order to allow P4HB to sustain additional rounds of disulfide formation. Following P4HB reoxidation, passes its electrons to molecular oxygen via FAD, leading to the production of reactive oxygen species (ROS) in the cell. Required for the proper folding of immunoglobulins. Plays an important role in ER stress-induced, CHOP-dependent apoptosis by activating the inositol 1,4,5-trisphosphate receptor IP3R1. The protein is ERO1-like protein alpha of Rattus norvegicus (Rat).